Reading from the N-terminus, the 1166-residue chain is Serine/threonine-protein kinase BRI1-like 1 (1166 aa).

Residues 1–21 (MKQRWLLVLILCFFTTSLVMG) form the signal peptide. Residues 22-776 (IHGKHLINDD…IHAKKQTVAT (755 aa)) lie on the Extracellular side of the membrane. An N-linked (GlcNAc...) asparagine glycan is attached at asparagine 33. Residues 66 to 73 (CSWRGVSC) carry the Cys pair 1 motif. 20 LRR repeats span residues 78 to 99 (RIVGLDLRNSGLTGTLNLVNLT), 103 to 124 (NLQNLYLQGNYFSSGGDSSGSD), 126 to 147 (YLQVLDLSSNSISDYSMVDYVF), 152 to 173 (NLVSVNISNNKLVGKLGFAPSS), 176 to 197 (SLTTVDLSYNILSDKIPESFIS), 202 to 224 (SLKYLDLTHNNLSGDFSDLSFGI), 227 to 248 (NLTFFSLSQNNLSGDKFPITLP), 252 to 274 (FLETLNISRNNLAGKIPNGEYWG), 278 to 300 (NLKQLSLAHNRLSGEIPPELSLL), 303 to 325 (TLVILDLSGNTFSGELPSQFTAC), 327 to 349 (WLQNLNLGNNYLSGDFLNTVVSK), 352 to 375 (GITYLYVAYNNISGSVPISLTNCS), 376 to 397 (NLRVLDLSSNGFTGNVPSGFCS), 403 to 424 (VLEKILIANNYLSGTVPMELGK), 427 to 449 (SLKTIDLSFNELTGPIPKEIWML), 451 to 473 (NLSDLVMWANNLTGTIPEGVCVK), 476 to 498 (NLETLILNNNLLTGSIPESISRC), 500 to 522 (NMIWISLSSNRLTGKIPSGIGNL), 524 to 547 (KLAILQLGNNSLSGNVPRQLGNCK), and 548 to 570 (SLIWLDLNSNNLTGDLPGELASQ). Asparagine 97 carries an N-linked (GlcNAc...) asparagine glycan. Asparagine 157 carries an N-linked (GlcNAc...) asparagine glycan. Asparagine 212, asparagine 227, asparagine 237, and asparagine 257 each carry an N-linked (GlcNAc...) asparagine glycan. Asparagine 362 and asparagine 373 each carry an N-linked (GlcNAc...) asparagine glycan. N-linked (GlcNAc...) asparagine glycans are attached at residues asparagine 451 and asparagine 461. 4 N-linked (GlcNAc...) asparagine glycosylation sites follow: asparagine 521, asparagine 532, asparagine 558, and asparagine 638. 3 LRR repeats span residues 664–686 (YLQVLNLGHNRITGTIPDSFGGL), 688–710 (AIGVLDLSHNNLQGYLPGSLGSL), and 712–734 (FLSDLDVSNNNLTGPIPFGGQLT). Asparagine 722 and asparagine 743 each carry an N-linked (GlcNAc...) asparagine glycan. A Cys pair 2 motif is present at residues 748 to 755 (CGVPLRPC). The chain crosses the membrane as a helical span at residues 777 to 797 (AVIAGIAFSFMCFVMLVMALY). Topologically, residues 798–1166 (RVRKVQKKEQ…LVEESRDKEP (369 aa)) are cytoplasmic. Threonine 848 and threonine 856 each carry phosphothreonine. The Protein kinase domain maps to 859–1147 (FSAETMVGSG…KADTEEDESL (289 aa)). ATP is bound by residues 865 to 873 (VGSGGFGEV) and lysine 887. A Phosphotyrosine modification is found at tyrosine 932. The active-site Proton acceptor is aspartate 987. At serine 1022 the chain carries Phosphoserine. Phosphotyrosine is present on tyrosine 1030. Position 1141 is a phosphothreonine (threonine 1141). The segment at 1142-1166 (EEDESLDEFSLKETPLVEESRDKEP) is disordered.

Belongs to the protein kinase superfamily. Ser/Thr protein kinase family. Predominantly expressed in vascular tissues. From 7 day old seedlings, it is expressed in the columella cells of the root tip, in the vascular initials in the meristematic region of the root and in vascular tissues. After germination, it is expressed in the stele cell and in the early differentiation zone of the root, where the expression continues from the root to the hypocotyls and cotyledons following the midvein. In mature plants, it is expressed in the vasculature of the leaf, predominantly in the midvein, and in the vascular bundles of inflorescence stems. Localizes to procambial cells of the vascular bundles located between the differentiating xylem and the phloem.

The protein localises to the cell membrane. It catalyses the reaction L-seryl-[protein] + ATP = O-phospho-L-seryl-[protein] + ADP + H(+). The enzyme catalyses L-threonyl-[protein] + ATP = O-phospho-L-threonyl-[protein] + ADP + H(+). In terms of biological role, receptor with a serine/threonine-protein kinase activity. Regulates, in response to brassinosteroid binding, a signaling cascade involved in plant development. Binds brassinolide. May be involved in cell growth and vascular differentiation. The chain is Serine/threonine-protein kinase BRI1-like 1 (BRL1) from Arabidopsis thaliana (Mouse-ear cress).